A 208-amino-acid polypeptide reads, in one-letter code: Small ribosomal subunit protein uS4 (208 aa).

The S4 RNA-binding domain occupies 98-159 (RRLDNVIYRL…KSRTVAVITN (62 aa)).

The protein belongs to the universal ribosomal protein uS4 family. Part of the 30S ribosomal subunit. Contacts protein S5. The interaction surface between S4 and S5 is involved in control of translational fidelity.

Its function is as follows. One of the primary rRNA binding proteins, it binds directly to 16S rRNA where it nucleates assembly of the body of the 30S subunit. With S5 and S12 plays an important role in translational accuracy. This chain is Small ribosomal subunit protein uS4, found in Desulfatibacillum aliphaticivorans.